A 418-amino-acid chain; its full sequence is Serine hydroxymethyltransferase (418 aa).

(6S)-5,6,7,8-tetrahydrofolate contacts are provided by residues L121 and 125–127; that span reads GHL. K230 carries the N6-(pyridoxal phosphate)lysine modification. Position 355–357 (355–357) interacts with (6S)-5,6,7,8-tetrahydrofolate; the sequence is SPF.

Belongs to the SHMT family. In terms of assembly, homodimer. It depends on pyridoxal 5'-phosphate as a cofactor.

It localises to the cytoplasm. The enzyme catalyses (6R)-5,10-methylene-5,6,7,8-tetrahydrofolate + glycine + H2O = (6S)-5,6,7,8-tetrahydrofolate + L-serine. The protein operates within one-carbon metabolism; tetrahydrofolate interconversion. Its pathway is amino-acid biosynthesis; glycine biosynthesis; glycine from L-serine: step 1/1. Catalyzes the reversible interconversion of serine and glycine with tetrahydrofolate (THF) serving as the one-carbon carrier. This reaction serves as the major source of one-carbon groups required for the biosynthesis of purines, thymidylate, methionine, and other important biomolecules. Also exhibits THF-independent aldolase activity toward beta-hydroxyamino acids, producing glycine and aldehydes, via a retro-aldol mechanism. This is Serine hydroxymethyltransferase from Alcanivorax borkumensis (strain ATCC 700651 / DSM 11573 / NCIMB 13689 / SK2).